The chain runs to 474 residues: Amidophosphoribosyltransferase (474 aa).

A propeptide spanning residues 1-10 (MLGESEVRDK) is cleaved from the precursor. C11 acts as the Nucleophile in catalysis. Positions 11–234 (CGIVGIYSQD…PGEILHLNRG (224 aa)) constitute a Glutamine amidotransferase type-2 domain. C250 is a [4Fe-4S] cluster binding site. The Mg(2+) site is built by S297, D359, and D360. The [4Fe-4S] cluster site is built by C396, C447, and C450.

In the C-terminal section; belongs to the purine/pyrimidine phosphoribosyltransferase family. Mg(2+) serves as cofactor. The cofactor is [4Fe-4S] cluster.

It catalyses the reaction 5-phospho-beta-D-ribosylamine + L-glutamate + diphosphate = 5-phospho-alpha-D-ribose 1-diphosphate + L-glutamine + H2O. It functions in the pathway purine metabolism; IMP biosynthesis via de novo pathway; N(1)-(5-phospho-D-ribosyl)glycinamide from 5-phospho-alpha-D-ribose 1-diphosphate: step 1/2. Functionally, catalyzes the formation of phosphoribosylamine from phosphoribosylpyrophosphate (PRPP) and glutamine. The protein is Amidophosphoribosyltransferase of Methanothermobacter thermautotrophicus (strain ATCC 29096 / DSM 1053 / JCM 10044 / NBRC 100330 / Delta H) (Methanobacterium thermoautotrophicum).